Here is a 259-residue protein sequence, read N- to C-terminus: Large ribosomal subunit protein uL2m (259 aa).

A disordered region spans residues 234–259 (VAMNPVDHPNGGRTKTPKPERSPGVE). Positions 250 to 259 (PKPERSPGVE) are enriched in basic and acidic residues.

It belongs to the universal ribosomal protein uL2 family.

It localises to the mitochondrion. The chain is Large ribosomal subunit protein uL2m (RPL2) from Paramecium tetraurelia.